The following is a 319-amino-acid chain: Ninja-family protein Os07g0602900 (319 aa).

3 disordered regions span residues 1–26 (MAAS…EKGG), 69–152 (LPGG…DAMY), and 181–234 (AEAM…LTMR). Gly residues predominate over residues 70-79 (PGGGGGGAGG). The segment covering 105-118 (ERWRRREMQSLKRL) has biased composition (basic and acidic residues). Polar residues predominate over residues 185-196 (DTSSSDNASCQN). Residues 225–234 (LRTLRSLTMR) are compositionally biased toward low complexity.

The protein belongs to the Ninja family.

It is found in the nucleus. This Oryza sativa subsp. japonica (Rice) protein is Ninja-family protein Os07g0602900.